The sequence spans 180 residues: Threonylcarbamoyl-AMP synthase (180 aa).

The YrdC-like domain maps to 1-180 (MRARALQHFL…DLITGAIVRP (180 aa)).

This sequence belongs to the SUA5 family. TsaC subfamily.

The protein resides in the cytoplasm. The enzyme catalyses L-threonine + hydrogencarbonate + ATP = L-threonylcarbamoyladenylate + diphosphate + H2O. Its function is as follows. Required for the formation of a threonylcarbamoyl group on adenosine at position 37 (t(6)A37) in tRNAs that read codons beginning with adenine. Catalyzes the conversion of L-threonine, HCO(3)(-)/CO(2) and ATP to give threonylcarbamoyl-AMP (TC-AMP) as the acyladenylate intermediate, with the release of diphosphate. This is Threonylcarbamoyl-AMP synthase from Methylobacillus flagellatus (strain ATCC 51484 / DSM 6875 / VKM B-1610 / KT).